The primary structure comprises 464 residues: ATP synthase subunit beta (464 aa).

152 to 159 (GGAGVGKT) contacts ATP.

This sequence belongs to the ATPase alpha/beta chains family. As to quaternary structure, F-type ATPases have 2 components, CF(1) - the catalytic core - and CF(0) - the membrane proton channel. CF(1) has five subunits: alpha(3), beta(3), gamma(1), delta(1), epsilon(1). CF(0) has three main subunits: a(1), b(2) and c(9-12). The alpha and beta chains form an alternating ring which encloses part of the gamma chain. CF(1) is attached to CF(0) by a central stalk formed by the gamma and epsilon chains, while a peripheral stalk is formed by the delta and b chains.

The protein localises to the cell membrane. The enzyme catalyses ATP + H2O + 4 H(+)(in) = ADP + phosphate + 5 H(+)(out). Functionally, produces ATP from ADP in the presence of a proton gradient across the membrane. The catalytic sites are hosted primarily by the beta subunits. The sequence is that of ATP synthase subunit beta from Ureaplasma urealyticum serovar 10 (strain ATCC 33699 / Western).